Consider the following 91-residue polypeptide: Small membrane A-kinase anchor protein (91 aa).

A lipid anchor (N-myristoyl glycine) is attached at Gly2.

It belongs to the small membrane AKAP family. May be palmitoylated at Cys-3.

The protein localises to the cell membrane. Functionally, binds to type I regulatory subunits of protein kinase A and may anchor/target them to the plasma membrane. The protein is Small membrane A-kinase anchor protein of Xenopus tropicalis (Western clawed frog).